The primary structure comprises 68 residues: Large ribosomal subunit protein uL29 (68 aa).

This sequence belongs to the universal ribosomal protein uL29 family.

In Rhodopseudomonas palustris (strain BisA53), this protein is Large ribosomal subunit protein uL29.